Consider the following 222-residue polypeptide: 7-carboxy-7-deazaguanine synthase (222 aa).

Residues 16 to 18 (LQG) and arginine 31 each bind substrate. The 201-residue stretch at 22 to 222 (NLGRPAVFVR…IMAWGNARGK (201 aa)) folds into the Radical SAM core domain. [4Fe-4S] cluster contacts are provided by cysteine 35, cysteine 39, and cysteine 42. Threonine 44 provides a ligand contact to Mg(2+). Threonine 77 contributes to the substrate binding site. S-adenosyl-L-methionine-binding positions include glycine 79 and 126 to 128 (SPK).

It belongs to the radical SAM superfamily. 7-carboxy-7-deazaguanine synthase family. As to quaternary structure, homodimer. [4Fe-4S] cluster is required as a cofactor. It depends on S-adenosyl-L-methionine as a cofactor. Mg(2+) serves as cofactor.

It carries out the reaction 6-carboxy-5,6,7,8-tetrahydropterin + H(+) = 7-carboxy-7-deazaguanine + NH4(+). The protein operates within purine metabolism; 7-cyano-7-deazaguanine biosynthesis. In terms of biological role, catalyzes the complex heterocyclic radical-mediated conversion of 6-carboxy-5,6,7,8-tetrahydropterin (CPH4) to 7-carboxy-7-deazaguanine (CDG), a step common to the biosynthetic pathways of all 7-deazapurine-containing compounds. In Pyrobaculum aerophilum (strain ATCC 51768 / DSM 7523 / JCM 9630 / CIP 104966 / NBRC 100827 / IM2), this protein is 7-carboxy-7-deazaguanine synthase.